A 265-amino-acid polypeptide reads, in one-letter code: Cytochrome c oxidase subunit 3 (265 aa).

Helical transmembrane passes span 16–36 (PWPISGSLGALATTVGGVMYM), 41–61 (GGATLLSLGLIFLLYTMFVWW), 84–104 (YGSILFIVSEVMSFFLFFWAS), 162–182 (AVYALVATVLLALVSTGFQGM), 200–220 (FLLATGFHGFHVIIGTLFLIV), and 242–262 (AWYWHFVDVVRLFPFVSIYWW).

Belongs to the cytochrome c oxidase subunit 3 family. In terms of assembly, component of the cytochrome c oxidase (complex IV, CIV), a multisubunit enzyme composed of a catalytic core of 3 subunits and several supernumerary subunits. The complex exists as a monomer or a dimer and forms supercomplexes (SCs) in the inner mitochondrial membrane with ubiquinol-cytochrome c oxidoreductase (cytochrome b-c1 complex, complex III, CIII).

Its subcellular location is the mitochondrion inner membrane. It carries out the reaction 4 Fe(II)-[cytochrome c] + O2 + 8 H(+)(in) = 4 Fe(III)-[cytochrome c] + 2 H2O + 4 H(+)(out). Functionally, component of the cytochrome c oxidase, the last enzyme in the mitochondrial electron transport chain which drives oxidative phosphorylation. The respiratory chain contains 3 multisubunit complexes succinate dehydrogenase (complex II, CII), ubiquinol-cytochrome c oxidoreductase (cytochrome b-c1 complex, complex III, CIII) and cytochrome c oxidase (complex IV, CIV), that cooperate to transfer electrons derived from NADH and succinate to molecular oxygen, creating an electrochemical gradient over the inner membrane that drives transmembrane transport and the ATP synthase. Cytochrome c oxidase is the component of the respiratory chain that catalyzes the reduction of oxygen to water. Electrons originating from reduced cytochrome c in the intermembrane space (IMS) are transferred via the dinuclear copper A center (CU(A)) of subunit 2 and heme A of subunit 1 to the active site in subunit 1, a binuclear center (BNC) formed by heme A3 and copper B (CU(B)). The BNC reduces molecular oxygen to 2 water molecules using 4 electrons from cytochrome c in the IMS and 4 protons from the mitochondrial matrix. This chain is Cytochrome c oxidase subunit 3 (COX3), found in Zea mays (Maize).